The primary structure comprises 83 residues: U15-theraphotoxin-Cg1a (83 aa).

Positions 1–21 are cleaved as a signal peptide; sequence MKAAILLAFAGLALLSVICHA. Residues 22 to 49 constitute a propeptide that is removed on maturation; sequence SENVEQDSFEEVFSAIFAMEDDLKPKER. Cystine bridges form between cysteine 51–cysteine 66, cysteine 58–cysteine 71, and cysteine 65–cysteine 77. Position 81 is an alanine amide (alanine 81).

The protein belongs to the neurotoxin 10 (Hwtx-1) family. 66 (Jztx-24) subfamily. In terms of tissue distribution, expressed by the venom gland.

It localises to the secreted. Functionally, probable ion channel inhibitor. The polypeptide is U15-theraphotoxin-Cg1a (Chilobrachys guangxiensis (Chinese earth tiger tarantula)).